The following is a 254-amino-acid chain: 3-deoxy-manno-octulosonate cytidylyltransferase (254 aa).

It belongs to the KdsB family.

The protein localises to the cytoplasm. It catalyses the reaction 3-deoxy-alpha-D-manno-oct-2-ulosonate + CTP = CMP-3-deoxy-beta-D-manno-octulosonate + diphosphate. The protein operates within nucleotide-sugar biosynthesis; CMP-3-deoxy-D-manno-octulosonate biosynthesis; CMP-3-deoxy-D-manno-octulosonate from 3-deoxy-D-manno-octulosonate and CTP: step 1/1. Its pathway is bacterial outer membrane biogenesis; lipopolysaccharide biosynthesis. Activates KDO (a required 8-carbon sugar) for incorporation into bacterial lipopolysaccharide in Gram-negative bacteria. The sequence is that of 3-deoxy-manno-octulosonate cytidylyltransferase from Chlamydia felis (strain Fe/C-56) (Chlamydophila felis).